The primary structure comprises 930 residues: Nonribosomal peptide synthetase btyA (930 aa).

An adenylation (A) domain region spans residues 31–440; sequence ESPHRLTYAE…RGRSKELICI (410 aa). In terms of domain architecture, Carrier spans 570–647; sequence PAGNETETLL…VLARQLQDGH (78 aa). S607 carries the O-(pantetheine 4'-phosphoryl)serine modification. The thioesterase (TE) domain stretch occupies residues 667–920; the sequence is PLWLIHPIGG…EDNVHKVYRV (254 aa).

The protein belongs to the NRP synthetase family.

It carries out the reaction 2 3-(4-hydroxyphenyl)pyruvate + H(+) = (2S)-2-(4-hydoxybenzyl)-3-(4-hydroxyphenyl)-2-furonol carboxylate + H2O. It participates in secondary metabolite biosynthesis. Its function is as follows. Nonribosomal peptide synthetase; part of the gene cluster that mediates the biosynthesis of butyrolactones, natural products that show a wide range of biological activities such as antitumor, antiparasitic or anti-inflammatory activity. The nonribosomal peptide synthetase btyA is responsible for the production of butyrolactone II, the core structure of butyrolactones. BtyA first activates 4-hydroxyphenylpyruvate (HPPA) through its A domain to AMP-HPPA. The HPPA unit is then loaded to the T domain and eventually transferred to the TE domain. Upon loading of another HPPA unit to the T domain, the TE domain promotes the enolate formation on the unit attached. Then aldol condensation establishes the carbon-carbon bond between the two units, followed by ester cyclization, and keto-enol tautomerization to yield the gamma-butyrolactone core. Hydrolysis, and finally esterification of the exposed carboxylic acid group yields butyrolactone II. Two additional enzymes, a prenyltransferase and an epoxidase, may be involved in the tailoring modifications of butyrolactone II to give butyrolactone III and butyrolactone I. In Aspergillus terreus (strain NIH 2624 / FGSC A1156), this protein is Nonribosomal peptide synthetase btyA.